Reading from the N-terminus, the 218-residue chain is Ribosomal RNA small subunit methyltransferase G (218 aa).

S-adenosyl-L-methionine-binding positions include G86, L91, 137–138 (AE), and R153.

It belongs to the methyltransferase superfamily. RNA methyltransferase RsmG family.

The protein resides in the cytoplasm. The enzyme catalyses guanosine(527) in 16S rRNA + S-adenosyl-L-methionine = N(7)-methylguanosine(527) in 16S rRNA + S-adenosyl-L-homocysteine. Specifically methylates the N7 position of guanine in position 527 of 16S rRNA. The protein is Ribosomal RNA small subunit methyltransferase G of Nitratidesulfovibrio vulgaris (strain ATCC 29579 / DSM 644 / CCUG 34227 / NCIMB 8303 / VKM B-1760 / Hildenborough) (Desulfovibrio vulgaris).